A 658-amino-acid polypeptide reads, in one-letter code: MSCSVSLSFPDGSKRDYPNEMTGLELAASISKSLAKKAVAYSLNGITRDLSDPLGQSGQIEIITREDPRALELIRHDCAHVLAEAVQELFPETQVTIGPVIENGFYYDFARQQPFTLNDLTIIEKKMHEIIQRNKPFRKEIWSRKKAREIFSEKNELYKVELIDSIPDNQDLKIYYQGDWFDLCRGPHMQSTGQIGNAFKLMKVAGAYWRGDAHNPMLTRIYGTAFANENDLKAYLHMLEEAEKRDHRRLGREMDLFHFQEDGPGMIFWHQKGWKMFQNLISYMRRRLDDHQYSEVNAPQVLDKSLWELSGHWGWYKENMFKAIPAIEDWDDKCIYALKPMNCPGHVQIFKHSLKSYRDLPVRLAEFGVVHRYEPSGALHGLMRVRSFTQDDAHIFCTDEQLADECLNINDLILSTYADFGFKEISLKLSTRPEKRVGSDSLWDHAENIMESVLKTIETKFAGQIKTSILPGEGAFYGPKFEYTLKDAIGREWQCGTTQVDFNLPERFDAFYIDKDSEKRQPVMIHRAIFGSMERFLGILIENFAGHMPLWLAPEQVVVAAITSEANEYAKKITARLKAVGLSAKSDLRNEKINYKIREHSLQKVPVILVCGKREAETNSVSMRRLGSTDQVFLSIEETIEQLKNEAMSPDLRRSING.

One can recognise a TGS domain in the interval 1 to 64 (MSCSVSLSFP…GQSGQIEIIT (64 aa)). Residues 246 to 549 (DHRRLGREMD…LIENFAGHMP (304 aa)) form a catalytic region. The Zn(2+) site is built by Cys-343, His-394, and His-526.

This sequence belongs to the class-II aminoacyl-tRNA synthetase family. In terms of assembly, homodimer. Zn(2+) is required as a cofactor.

It localises to the cytoplasm. The catalysed reaction is tRNA(Thr) + L-threonine + ATP = L-threonyl-tRNA(Thr) + AMP + diphosphate + H(+). Functionally, catalyzes the attachment of threonine to tRNA(Thr) in a two-step reaction: L-threonine is first activated by ATP to form Thr-AMP and then transferred to the acceptor end of tRNA(Thr). Also edits incorrectly charged L-seryl-tRNA(Thr). The protein is Threonine--tRNA ligase of Bartonella quintana (strain Toulouse) (Rochalimaea quintana).